Here is a 461-residue protein sequence, read N- to C-terminus: 3-deoxy-D-manno-octulosonic acid transferase (461 aa).

The helical; Signal-anchor transmembrane segment at 2 to 22 threads the bilayer; the sequence is MLLYYTLSFILLPVYFIIIFI. In terms of domain architecture, RPE1 insert spans 47-88; the sequence is SALDFIQMSVNKEGFTDHKTTSYVDMHRNASLMYKLSLERSY. Glu-102 (proton acceptor) is an active-site residue. CMP is bound by residues 306–307, 347–349, and 372–375; these read PR, FGE, and NILE.

This sequence belongs to the glycosyltransferase group 1 family. Glycosyltransferase 30 subfamily.

Its subcellular location is the cell inner membrane. The catalysed reaction is lipid IVA (E. coli) + CMP-3-deoxy-beta-D-manno-octulosonate = alpha-Kdo-(2-&gt;6)-lipid IVA (E. coli) + CMP + H(+). The protein operates within bacterial outer membrane biogenesis; LPS core biosynthesis. Functionally, involved in lipopolysaccharide (LPS) biosynthesis. Catalyzes the transfer of 3-deoxy-D-manno-octulosonate (Kdo) residue(s) from CMP-Kdo to lipid IV(A), the tetraacyldisaccharide-1,4'-bisphosphate precursor of lipid A. This chain is 3-deoxy-D-manno-octulosonic acid transferase (waaA), found in Rickettsia prowazekii (strain Madrid E).